The chain runs to 248 residues: 5'-nucleotidase SurE (248 aa).

A divalent metal cation contacts are provided by Asp-8, Asp-9, Ser-39, and Asn-92.

The protein belongs to the SurE nucleotidase family. A divalent metal cation is required as a cofactor.

It localises to the cytoplasm. It carries out the reaction a ribonucleoside 5'-phosphate + H2O = a ribonucleoside + phosphate. In terms of biological role, nucleotidase that shows phosphatase activity on nucleoside 5'-monophosphates. This Tolumonas auensis (strain DSM 9187 / NBRC 110442 / TA 4) protein is 5'-nucleotidase SurE.